Consider the following 185-residue polypeptide: Ribosome-recycling factor (185 aa).

The protein belongs to the RRF family.

It is found in the cytoplasm. Responsible for the release of ribosomes from messenger RNA at the termination of protein biosynthesis. May increase the efficiency of translation by recycling ribosomes from one round of translation to another. The chain is Ribosome-recycling factor from Streptococcus mutans serotype c (strain ATCC 700610 / UA159).